We begin with the raw amino-acid sequence, 440 residues long: Transposon Ty1-DR3 Gag polyprotein (440 aa).

3 stretches are compositionally biased toward polar residues: residues 1-10 (MESQQLSNYP), 48-60 (TKAN…TPAS), and 127-152 (QSQF…GNTF). Disordered stretches follow at residues 1–93 (MESQ…MMTQ), 126–173 (PQSQ…RPPP), and 352–440 (GSRN…PETY). The span at 153–165 (TDSSSADSDMTST) shows a compositional bias: low complexity. The interval 299 to 401 (NNGIHINNKV…NSKSKTARAH (103 aa)) is RNA-binding. Residues 402-428 (NVSTSINSPSTDNDSISKSTTEPIQLN) are compositionally biased toward polar residues. Ser-416 carries the phosphoserine modification. Residues 429 to 440 (NKHDLHLRPETY) are compositionally biased toward basic and acidic residues.

As to quaternary structure, homotrimer.

It is found in the cytoplasm. Capsid protein (CA) is the structural component of the virus-like particle (VLP), forming the shell that encapsulates the retrotransposons dimeric RNA genome. The particles are assembled from trimer-clustered units and there are holes in the capsid shells that allow for the diffusion of macromolecules. CA also has nucleocapsid-like chaperone activity, promoting primer tRNA(i)-Met annealing to the multipartite primer-binding site (PBS), dimerization of Ty1 RNA and initiation of reverse transcription. The polypeptide is Transposon Ty1-DR3 Gag polyprotein (TY1A-DR3) (Saccharomyces cerevisiae (strain ATCC 204508 / S288c) (Baker's yeast)).